The following is a 76-amino-acid chain: Small ribosomal subunit protein bS21C (76 aa).

Positions 52 to 76 (GRQRKLARKQMQREGLLPTKPRKDK) are disordered.

It belongs to the bacterial ribosomal protein bS21 family.

The polypeptide is Small ribosomal subunit protein bS21C (rpsU3) (Agrobacterium fabrum (strain C58 / ATCC 33970) (Agrobacterium tumefaciens (strain C58))).